A 109-amino-acid polypeptide reads, in one-letter code: Large ribosomal subunit protein uL23 (109 aa).

Belongs to the universal ribosomal protein uL23 family. Part of the 50S ribosomal subunit. Contacts protein L29, and trigger factor when it is bound to the ribosome.

Functionally, one of the early assembly proteins it binds 23S rRNA. One of the proteins that surrounds the polypeptide exit tunnel on the outside of the ribosome. Forms the main docking site for trigger factor binding to the ribosome. The protein is Large ribosomal subunit protein uL23 of Aquifex pyrophilus.